The primary structure comprises 714 residues: Hormonally up-regulated neu tumor-associated kinase (714 aa).

Residues 1–15 (MPAAAGDGLLGEPAA) show a composition bias toward low complexity. The disordered stretch occupies residues 1–26 (MPAAAGDGLLGEPAAPGGGGGAEDAA). The Protein kinase domain maps to 62–320 (LIGSRKLGEG…IQQALANRWL (259 aa)). Residues 68 to 76 (LGEGSFAKV) and K91 contribute to the ATP site. Catalysis depends on D186, which acts as the Proton acceptor. The segment covering 437-461 (KKPKEQEKRGDFLHRPFSKKLDKNL) has biased composition (basic and acidic residues). Disordered regions lie at residues 437 to 471 (KKPK…SGSL), 518 to 552 (MEFI…HKED), and 590 to 615 (ARRN…HTPL). Low complexity predominate over residues 599–611 (LSPGLPSGSMSPL).

Belongs to the protein kinase superfamily. CAMK Ser/Thr protein kinase family. SNF1 subfamily.

The enzyme catalyses L-seryl-[protein] + ATP = O-phospho-L-seryl-[protein] + ADP + H(+). It carries out the reaction L-threonyl-[protein] + ATP = O-phospho-L-threonyl-[protein] + ADP + H(+). The chain is Hormonally up-regulated neu tumor-associated kinase (HUNK) from Homo sapiens (Human).